The sequence spans 190 residues: Potassium-transporting ATPase KdpC subunit (190 aa).

Residues 10–30 form a helical membrane-spanning segment; that stretch reads TFLFLLLITGGVYPLLTTALG.

The protein belongs to the KdpC family. The system is composed of three essential subunits: KdpA, KdpB and KdpC.

It is found in the cell inner membrane. Its function is as follows. Part of the high-affinity ATP-driven potassium transport (or Kdp) system, which catalyzes the hydrolysis of ATP coupled with the electrogenic transport of potassium into the cytoplasm. This subunit acts as a catalytic chaperone that increases the ATP-binding affinity of the ATP-hydrolyzing subunit KdpB by the formation of a transient KdpB/KdpC/ATP ternary complex. In Escherichia coli O81 (strain ED1a), this protein is Potassium-transporting ATPase KdpC subunit.